The following is a 261-amino-acid chain: Serine/arginine-rich splicing factor 12 (261 aa).

An RRM domain is found at 10–88 (TSLFIRNVAD…RQIEIQFAQG (79 aa)). The segment at 86–261 (AQGDRKTPGQ…SRSYRHKNSW (176 aa)) is disordered. The span at 88 to 109 (GDRKTPGQMKSKERHPCSPSDH) shows a compositional bias: basic and acidic residues. Composition is skewed to basic residues over residues 110-122 (RRSR…RTRS) and 178-191 (GRSR…RSKS). Positions 192-209 (IGKSQSSSPQKQTSSGTK) are enriched in low complexity. Polar residues predominate over residues 230–239 (GYTNSETKVQ). The span at 240–261 (TAKHSHFRSHSRSRSYRHKNSW) shows a compositional bias: basic residues.

The protein belongs to the splicing factor SR family. As to expression, expressed in testis.

It is found in the nucleus. In terms of biological role, splicing factor that seems to antagonize SR proteins in pre-mRNA splicing regulation. The chain is Serine/arginine-rich splicing factor 12 (SRSF12) from Homo sapiens (Human).